A 318-amino-acid polypeptide reads, in one-letter code: Methionyl-tRNA formyltransferase (318 aa).

112-115 provides a ligand contact to (6S)-5,6,7,8-tetrahydrofolate; sequence SILP.

It belongs to the Fmt family.

It carries out the reaction L-methionyl-tRNA(fMet) + (6R)-10-formyltetrahydrofolate = N-formyl-L-methionyl-tRNA(fMet) + (6S)-5,6,7,8-tetrahydrofolate + H(+). Functionally, attaches a formyl group to the free amino group of methionyl-tRNA(fMet). The formyl group appears to play a dual role in the initiator identity of N-formylmethionyl-tRNA by promoting its recognition by IF2 and preventing the misappropriation of this tRNA by the elongation apparatus. The polypeptide is Methionyl-tRNA formyltransferase (Shewanella baltica (strain OS195)).